Reading from the N-terminus, the 117-residue chain is Immunoglobulin heavy variable 1-46 (117 aa).

Positions 1–19 are cleaved as a signal peptide; the sequence is MDWTWRVFCLLAVAPGAHS. Residues 20–44 form a framework-1 region; that stretch reads QVQLVQSGAEVKKPGASVKVSCKAS. The region spanning 20–117 is the Ig-like domain; the sequence is QVQLVQSGAE…EDTAVYYCAR (98 aa). A disulfide bridge links C41 with C115. The tract at residues 45–52 is complementarity-determining-1; sequence GYTFTSYY. The interval 53–69 is framework-2; sequence MHWVRQAPGQGLEWMGI. The interval 70–77 is complementarity-determining-2; sequence INPSGGST. The tract at residues 78-115 is framework-3; sequence SYAQKFQGRVTMTRDTSTSTVYMELSSLRSEDTAVYYC. Positions 116–117 are complementarity-determining-3; that stretch reads AR.

As to quaternary structure, immunoglobulins are composed of two identical heavy chains and two identical light chains; disulfide-linked.

It is found in the secreted. Its subcellular location is the cell membrane. Functionally, v region of the variable domain of immunoglobulin heavy chains that participates in the antigen recognition. Immunoglobulins, also known as antibodies, are membrane-bound or secreted glycoproteins produced by B lymphocytes. In the recognition phase of humoral immunity, the membrane-bound immunoglobulins serve as receptors which, upon binding of a specific antigen, trigger the clonal expansion and differentiation of B lymphocytes into immunoglobulins-secreting plasma cells. Secreted immunoglobulins mediate the effector phase of humoral immunity, which results in the elimination of bound antigens. The antigen binding site is formed by the variable domain of one heavy chain, together with that of its associated light chain. Thus, each immunoglobulin has two antigen binding sites with remarkable affinity for a particular antigen. The variable domains are assembled by a process called V-(D)-J rearrangement and can then be subjected to somatic hypermutations which, after exposure to antigen and selection, allow affinity maturation for a particular antigen. The protein is Immunoglobulin heavy variable 1-46 of Homo sapiens (Human).